A 391-amino-acid chain; its full sequence is MAIINMSELDLQGKRVLIREDLNVPVSEGVVTSDARLRAALPSIKLALEKGAAVMVMSHLGRPTEGEFNSEFSLQPVVDYLTKALSCPVRLAKDYLDGVEANVGEVVVFENVRFNVGEKKNDEALAKKLAALCDVYVMDAFGTAHRAQASTHGVGLHAPIACAGPLLAGELEALGKAMDNPARPLVAIVGGSKVSTKLTVLESLSKIVDQLVVGGGIANTFIAAAGHEVGKSLYEADLIDEAKRLAANAQSRGGDIPVPTDVVVAGEFSPTAAATLKGVSQVSADEMIFDIGPDSSEALAEILKNAGTIVWNGPVGVFEFDQFGEGTKRIAAAIADSSAFSIAGGGDTLAAVDKYGIADKVSYISTGGGAFLEFLEGKELPAVAMLESRGK.

Substrate is bound by residues 21–23 (DLN), arginine 36, 59–62 (HLGR), arginine 113, and arginine 146. Residues lysine 197, glutamate 319, and 345-348 (GGDT) contribute to the ATP site.

Belongs to the phosphoglycerate kinase family. In terms of assembly, monomer.

It is found in the cytoplasm. The catalysed reaction is (2R)-3-phosphoglycerate + ATP = (2R)-3-phospho-glyceroyl phosphate + ADP. The protein operates within carbohydrate degradation; glycolysis; pyruvate from D-glyceraldehyde 3-phosphate: step 2/5. In Shewanella woodyi (strain ATCC 51908 / MS32), this protein is Phosphoglycerate kinase.